The chain runs to 255 residues: Proliferating cell nuclear antigen 2 (255 aa).

The DNA-binding element occupies 61-80 (HCDRNVSLGLDLKSLGKVLK).

Belongs to the PCNA family. Homotrimer. Interacts with the catalytic subunits of two DNA polymerase complexes: PolD1 in the delta complex and PolE1/DNApol-epsilon255 in the epsilon complex.

The protein localises to the nucleus. Its subcellular location is the chromosome. The protein resides in the cytoplasm. Its function is as follows. Likely to be an auxiliary protein of DNA polymerase delta complex and is probably involved in the control of DNA replication and repair by increasing the polymerase's processibility. May function independently of PCNA during DNA repair. The polypeptide is Proliferating cell nuclear antigen 2 (Drosophila melanogaster (Fruit fly)).